The sequence spans 296 residues: Homeobox protein SIX2 (296 aa).

A DNA-binding region (homeobox) is located at residues 124–183 (GEETSYCFKEKSRSVLREWYAHNPYPSPREKRELAEATGLTTTQVSNWFKNRRQRDRAAE). Positions 168 to 284 (VSNWFKNRRQ…HHHSLQDSIL (117 aa)) are disordered. Positions 179 to 190 (DRAAEAKERENS) are enriched in basic and acidic residues. Low complexity-rich tracts occupy residues 191–206 (ENSN…SSLN) and 228–237 (HSSSSPALLL). The span at 254-264 (PPGPSAVPVPV) shows a compositional bias: pro residues.

This sequence belongs to the SIX/Sine oculis homeobox family. As to quaternary structure, interacts with TCF7L2; in a canonical Wnt signaling independent manner; prevents transcription of differentiation genes in cap mesenchyme. Interacts with OSR1; form a strong repressor complex with TCF7L2, TLE2 and TLE3 to prevent the activation of Wnt/beta-catenin target genes in the cap mesenchyme. Interacts with HOXA11, EYA1 and EYA3. In terms of tissue distribution, expressed in phalangeal tendons, in smooth muscle and in head and body mesenchyme.

The protein localises to the nucleus. Transcription factor that plays an important role in the development of several organs, including kidney, skull and stomach. During kidney development, maintains cap mesenchyme multipotent nephron progenitor cells in an undifferentiated state by opposing the inductive signals emanating from the ureteric bud and cooperates with WNT9B to promote renewing progenitor cells proliferation. Acts through its interaction with TCF7L2 and OSR1 in a canonical Wnt signaling independent manner preventing transcription of differentiation genes in cap mesenchyme such as WNT4. Also acts independently of OSR1 to activate expression of many cap mesenchyme genes, including itself, GDNF and OSR1. During craniofacial development plays a role in growth and elongation of the cranial base through regulation of chondrocyte differentiation. During stomach organogenesis, controls pyloric sphincter formation and mucosal growth through regulation of a gene network including NKX2-5, BMPR1B, BMP4, SOX9 and GREM1. During branchial arch development, acts to mediate HOXA2 control over the insulin-like growth factor pathway. May also be involved in limb tendon and ligament development. Plays a role in cell proliferation and migration. In Mus musculus (Mouse), this protein is Homeobox protein SIX2 (Six2).